A 544-amino-acid polypeptide reads, in one-letter code: Chaperonin GroEL 1 (544 aa).

ATP is bound by residues 29–32 (TLGP), 86–90 (DGTTT), Gly-413, 479–481 (NAA), and Asp-495.

It belongs to the chaperonin (HSP60) family. As to quaternary structure, forms a cylinder of 14 subunits composed of two heptameric rings stacked back-to-back. Interacts with the co-chaperonin GroES.

It localises to the cytoplasm. The enzyme catalyses ATP + H2O + a folded polypeptide = ADP + phosphate + an unfolded polypeptide.. In terms of biological role, together with its co-chaperonin GroES, plays an essential role in assisting protein folding. The GroEL-GroES system forms a nano-cage that allows encapsulation of the non-native substrate proteins and provides a physical environment optimized to promote and accelerate protein folding. In Trichormus variabilis (strain ATCC 29413 / PCC 7937) (Anabaena variabilis), this protein is Chaperonin GroEL 1.